We begin with the raw amino-acid sequence, 418 residues long: UDP-N-acetyl-D-mannosamine dehydrogenase (418 aa).

NAD(+) is bound by residues Y10, I11, D30, T85, and T119. R152, V153, K204, N208, R211, H242, R244, T249, and G255 together coordinate UDP-N-acetyl-alpha-D-mannosaminouronate. The Proton donor/acceptor role is filled by K204. Catalysis depends on C258, which acts as the Nucleophile. An NAD(+)-binding site is contributed by K261. Residues Y318 and K319 each contribute to the UDP-N-acetyl-alpha-D-mannosaminouronate site. Residue R326 coordinates NAD(+). A UDP-N-acetyl-alpha-D-mannosaminouronate-binding site is contributed by R398.

The protein belongs to the UDP-glucose/GDP-mannose dehydrogenase family. Homodimer.

It carries out the reaction UDP-N-acetyl-alpha-D-mannosamine + 2 NAD(+) + H2O = UDP-N-acetyl-alpha-D-mannosaminouronate + 2 NADH + 3 H(+). Functionally, catalyzes the four-electron oxidation of UDP-N-acetyl-D-mannosamine (UDP-ManNAc), reducing NAD(+) and releasing UDP-N-acetylmannosaminuronic acid (UDP-ManNAcA). The polypeptide is UDP-N-acetyl-D-mannosamine dehydrogenase (Pyrococcus horikoshii (strain ATCC 700860 / DSM 12428 / JCM 9974 / NBRC 100139 / OT-3)).